A 672-amino-acid polypeptide reads, in one-letter code: Acetyl-coenzyme A synthetase (672 aa).

Residues 217–220 (RRGK) and Thr335 contribute to the CoA site. Residues 411–413 (GEP), 435–440 (DTWWQT), Asp529, Arg544, and Arg555 contribute to the ATP site. Mg(2+) is bound by residues Val566, His568, and Ile571. Arg613 is a binding site for CoA. Lys638 is modified (N6-acetyllysine).

The protein belongs to the ATP-dependent AMP-binding enzyme family. The cofactor is Mg(2+). Acetylated. Deacetylation by the SIR2-homolog deacetylase activates the enzyme. In terms of processing, the N-terminus is blocked.

The catalysed reaction is acetate + ATP + CoA = acetyl-CoA + AMP + diphosphate. Its function is as follows. Catalyzes the conversion of acetate into acetyl-CoA (AcCoA), an essential intermediate at the junction of anabolic and catabolic pathways. AcsA undergoes a two-step reaction. In the first half reaction, AcsA combines acetate with ATP to form acetyl-adenylate (AcAMP) intermediate. In the second half reaction, it can then transfer the acetyl group from AcAMP to the sulfhydryl group of CoA, forming the product AcCoA. The polypeptide is Acetyl-coenzyme A synthetase (Methanothrix soehngenii (Methanosaeta concilii)).